A 356-amino-acid polypeptide reads, in one-letter code: Tyrosine recombinase XerS (356 aa).

Residues 16–121 form the Core-binding (CB) domain; the sequence is LMPWYVLEYY…ALSSLYKYLT (106 aa). The 186-residue stretch at 169-354 folds into the Tyr recombinase domain; the sequence is GFLTYIDQEH…VSDEQKNALD (186 aa). Residues Arg210, Lys234, His306, Arg309, and His332 contribute to the active site. The O-(3'-phospho-DNA)-tyrosine intermediate role is filled by Tyr341.

It belongs to the 'phage' integrase family. XerS subfamily.

It localises to the cytoplasm. Its activity is regulated as follows. FtsK is required for recombination. Site-specific tyrosine recombinase, which acts by catalyzing the cutting and rejoining of the recombining DNA molecules. Essential to convert dimers of the bacterial chromosome into monomers to permit their segregation at cell division. This is Tyrosine recombinase XerS from Streptococcus pneumoniae (strain 70585).